A 444-amino-acid chain; its full sequence is Adenylosuccinate synthetase (444 aa).

GTP is bound by residues 12–18 (GDEGKGK) and 40–42 (GHT). Asp13 serves as the catalytic Proton acceptor. 2 residues coordinate Mg(2+): Asp13 and Gly40. Residues 13-16 (DEGK), 38-41 (NAGH), Thr128, Arg142, Gln223, Thr238, and Arg302 each bind IMP. The Proton donor role is filled by His41. 298–304 (TTTGRRR) contributes to the substrate binding site. GTP-binding positions include Arg304, 330-332 (KLD), and 412-414 (SLG).

The protein belongs to the adenylosuccinate synthetase family. Homodimer. The cofactor is Mg(2+).

It localises to the cytoplasm. The catalysed reaction is IMP + L-aspartate + GTP = N(6)-(1,2-dicarboxyethyl)-AMP + GDP + phosphate + 2 H(+). It participates in purine metabolism; AMP biosynthesis via de novo pathway; AMP from IMP: step 1/2. Its function is as follows. Plays an important role in the de novo pathway of purine nucleotide biosynthesis. Catalyzes the first committed step in the biosynthesis of AMP from IMP. The protein is Adenylosuccinate synthetase of Synechococcus elongatus (strain ATCC 33912 / PCC 7942 / FACHB-805) (Anacystis nidulans R2).